Consider the following 621-residue polypeptide: tRNA uridine 5-carboxymethylaminomethyl modification enzyme MnmG (621 aa).

FAD is bound at residue 8–13 (GAGHAG). 269–283 (GPRYCPSVEDKIFRF) lines the NAD(+) pocket.

Belongs to the MnmG family. Homodimer. Heterotetramer of two MnmE and two MnmG subunits. It depends on FAD as a cofactor.

Its subcellular location is the cytoplasm. NAD-binding protein involved in the addition of a carboxymethylaminomethyl (cmnm) group at the wobble position (U34) of certain tRNAs, forming tRNA-cmnm(5)s(2)U34. In Chlorobium chlorochromatii (strain CaD3), this protein is tRNA uridine 5-carboxymethylaminomethyl modification enzyme MnmG.